The primary structure comprises 136 residues: Congerin-2 (136 aa).

An N-acetylserine modification is found at Ser-2. In terms of domain architecture, Galectin spans 4–136 (RAEVRNIPFK…DARLTFVRLE (133 aa)). An a beta-D-galactoside-binding site is contributed by 70 to 76 (WQQEERS).

As to quaternary structure, homodimer.

In terms of biological role, this protein binds beta-galactoside. Its physiological function is not yet known. This chain is Congerin-2, found in Conger myriaster (Conger eel).